The chain runs to 308 residues: Apolipoprotein E (308 aa).

A signal peptide spans 1 to 18 (MKFLWAALVVTLLAGCRA). Repeat copies occupy residues 75–96 (LLIE…KQVG), 97–118 (PIAQ…ARLE), 119–140 (SDME…AALG), 141–162 (QNTD…KRLL), 163–184 (RDAE…EAAE), 185–206 (RGVS…LQAI), 207–224 (PPSQ…QKVR), and 225–246 (GRLE…DQME). The 8 X 22 AA approximate tandem repeats stretch occupies residues 75 to 246 (LLIEETMKEV…RLDDMRDQME (172 aa)). An LDL and other lipoprotein receptors binding region spans residues 153-163 (HLRKLRKRLLR). 157 to 160 (LRKR) contributes to the heparin binding site. Residues 205–281 (AIPPSQQLRE…SWFEPLVQDM (77 aa)) are lipid-binding and lipoprotein association. Residue 220 to 227 (GQKVRGRL) participates in heparin binding. A homooligomerization region spans residues 257–308 (SQVRLQAEAFQTRLKSWFEPLVQDMQRQWASLVEKVQSTLGISPSTKPSKTK). The interval 269-281 (RLKSWFEPLVQDM) is specificity for association with VLDL.

Belongs to the apolipoprotein A1/A4/E family. Homotetramer. May interact with ABCA1; functionally associated with ABCA1 in the biogenesis of HDLs. May interact with APP/A4 amyloid-beta peptide; the interaction is extremely stable in vitro but its physiological significance is unclear. May interact with MAPT. May interact with MAP2. In the cerebrospinal fluid, interacts with secreted SORL1. Interacts with PMEL; this allows the loading of PMEL luminal fragment on ILVs to induce fibril nucleation. APOE exists as multiple glycosylated and sialylated glycoforms within cells and in plasma. The extent of glycosylation and sialylation are tissue and context specific. Post-translationally, glycated in plasma VLDL. In terms of processing, phosphorylated by FAM20C in the extracellular medium.

Its subcellular location is the secreted. It localises to the extracellular space. The protein resides in the extracellular matrix. The protein localises to the extracellular vesicle. It is found in the endosome. Its subcellular location is the multivesicular body. In terms of biological role, APOE is an apolipoprotein, a protein associating with lipid particles, that mainly functions in lipoprotein-mediated lipid transport between organs via the plasma and interstitial fluids. APOE is a core component of plasma lipoproteins and is involved in their production, conversion and clearance. Apolipoproteins are amphipathic molecules that interact both with lipids of the lipoprotein particle core and the aqueous environment of the plasma. As such, APOE associates with chylomicrons, chylomicron remnants, very low density lipoproteins (VLDL) and intermediate density lipoproteins (IDL) but shows a preferential binding to high-density lipoproteins (HDL). It also binds a wide range of cellular receptors including the LDL receptor/LDLR and the very low-density lipoprotein receptor/VLDLR that mediate the cellular uptake of the APOE-containing lipoprotein particles. Finally, APOE also has a heparin-binding activity and binds heparan-sulfate proteoglycans on the surface of cells, a property that supports the capture and the receptor-mediated uptake of APOE-containing lipoproteins by cells. The protein is Apolipoprotein E (APOE) of Pteropus vampyrus (Large flying fox).